The sequence spans 614 residues: MGSPAAGWGAAPAKRARREGSAESSCGSPADRDPRLWDTERLCQHLSRNGVGEPGLLRRFRESGVTGAMLLDLPACALRITHACLPDERLKVLACLNQLRQTADIMKVFNDPVHGHIEIHPLLVRIIDTPQFQRLRYIKQLGGTYFVFPGASHNRFEHSLGVGYLAGCLVRELKERQPELDITQRDILCVEIAGLCHDLGHGPFSHMFDGRFIPLARQGLNWKHETASVEMFEHLITSNKLEEIMESYGLILEEDIAFIKEQIGGPIDETACEESWPYRGRPKEKSFLYEIVANKKNGIDVDKWDYFARDCHHLGIQNNFDYRRLIKFTRVCEAGNQKHICARDKEVGNLYDMFHTRNCLHRRAYQHKVGNIIEIMITEAFQKADCFFQIEGSKGKLYHISTAMEDMEAYTKLTDNIYLEILHSSRPELSEAREILHKIERRELYKFLGETQPEKVNEIPKDEYDGLAGDIANSKPEKDPPDVELTAEDFIVDVVNMDYGMKDQNPIDNVLFYCKADPSKAIKISKEQVSRLLPGTFSEQVIRVYCKRQDPIIVSAAKQYFVQWCIKRDFTKPQDGDVVAPHLTPLKQSWNNRSKTEYTTASEPSCKQKLSFNK.

Residues 1–13 show a composition bias toward low complexity; that stretch reads MGSPAAGWGAAPA. Residues 1 to 33 form a disordered region; sequence MGSPAAGWGAAPAKRARREGSAESSCGSPADRD. The region spanning 37–102 is the SAM domain; the sequence is WDTERLCQHL…LACLNQLRQT (66 aa). GTP is bound by residues Lys107 and Val108. Position 110 (Asn110) interacts with dGTP. 3 residues coordinate GTP: Asp128, Gln133, and Arg136. Gln140, Leu141, Val147, and Arg155 together coordinate dGTP. Gln140 provides a ligand contact to dATP. Gln140 is a dCTP binding site. Gln140 serves as a coordination point for dTTP. Arg155 lines the dATP pocket. Arg155 lines the dCTP pocket. Arg155 is a dTTP binding site. The 153-residue stretch at 155–307 folds into the HD domain; the sequence is RFEHSLGVGY…GIDVDKWDYF (153 aa). His158, His197, and Asp198 together coordinate Mn(2+). Positions 201 and 206 each coordinate dATP. His201 and His206 together coordinate dCTP. Positions 201 and 206 each coordinate dTTP. The active site involves His224. Position 302 (Asp302) interacts with Mn(2+). Residues Lys303, Tyr306, Asp310, Arg324, Arg343, Lys345, Asn349, Arg357, Tyr365, Gln366, His367, and Lys368 each coordinate dGTP. Positions 303, 306, and 310 each coordinate dATP. Positions 303, 306, and 310 each coordinate dCTP. Lys303, Tyr306, and Asp310 together coordinate dTTP. Residue Arg357 participates in dATP binding. DCTP is bound at residue Arg357. Gln366 lines the dATP pocket. Residue Gln366 coordinates dCTP. Gln366 provides a ligand contact to dTTP. Residues Arg442, Lys446, and Lys515 each coordinate GTP. DGTP is bound at residue Lys515.

This sequence belongs to the SAMHD1 family. In terms of assembly, homodimer; in absence of GTP and dNTP. Homotetramer; in GTP- and dNTP-bound form. Interacts with rbbp8/CtIP. The cofactor is Zn(2+).

It is found in the nucleus. The protein resides in the chromosome. It catalyses the reaction a 2'-deoxyribonucleoside 5'-triphosphate + H2O = a 2'-deoxyribonucleoside + triphosphate + H(+). The enzyme catalyses dATP + H2O = 2'-deoxyadenosine + triphosphate + H(+). The catalysed reaction is dCTP + H2O = 2'-deoxycytidine + triphosphate + H(+). It carries out the reaction dGTP + H2O = 2'-deoxyguanosine + triphosphate + H(+). It catalyses the reaction dTTP + H2O = thymidine + triphosphate + H(+). Allosterically activated and regulated via the combined actions of GTP and dNTPs (dATP, dGTP, dTTP and dCTP): Allosteric site 1 binds GTP, while allosteric site 2 binds dNTP. Allosteric activation promotes the formation of highly active homotetramers. Functionally, protein that acts both as a host restriction factor involved in defense response to virus and as a regulator of DNA end resection at stalled replication forks. Has deoxynucleoside triphosphate (dNTPase) activity, which is required to restrict infection by viruses: dNTPase activity reduces cellular dNTP levels to levels too low for retroviral reverse transcription to occur, blocking early-stage virus replication in dendritic and other myeloid cells. Functions during S phase at stalled DNA replication forks to promote the resection of gapped or reversed forks: acts by stimulating the exonuclease activity of MRE11, activating the ATR-CHK1 pathway and allowing the forks to restart replication. Its ability to promote degradation of nascent DNA at stalled replication forks is required to prevent induction of type I interferons, thereby preventing chronic inflammation. Ability to promote DNA end resection at stalled replication forks is independent of dNTPase activity. The polypeptide is Deoxynucleoside triphosphate triphosphohydrolase SAMHD1 (Gallus gallus (Chicken)).